We begin with the raw amino-acid sequence, 196 residues long: Holliday junction branch migration complex subunit RuvA (196 aa).

The domain I stretch occupies residues 1-63; that stretch reads MYEYFKGIIS…EDAELLYGFA (63 aa). Residues 64–142 form a domain II region; the sequence is TEEEKQLFLS…AAGSPAESKA (79 aa). Positions 143-146 are flexible linker; the sequence is PVQT. The domain III stretch occupies residues 147-196; sequence ADNQELEEAMEAMLALGYKAAELKKIKKFFEGTTDTAENYIKSALKMLVK.

This sequence belongs to the RuvA family. As to quaternary structure, homotetramer. Forms an RuvA(8)-RuvB(12)-Holliday junction (HJ) complex. HJ DNA is sandwiched between 2 RuvA tetramers; dsDNA enters through RuvA and exits via RuvB. An RuvB hexamer assembles on each DNA strand where it exits the tetramer. Each RuvB hexamer is contacted by two RuvA subunits (via domain III) on 2 adjacent RuvB subunits; this complex drives branch migration. In the full resolvosome a probable DNA-RuvA(4)-RuvB(12)-RuvC(2) complex forms which resolves the HJ.

It is found in the cytoplasm. Functionally, the RuvA-RuvB-RuvC complex processes Holliday junction (HJ) DNA during genetic recombination and DNA repair, while the RuvA-RuvB complex plays an important role in the rescue of blocked DNA replication forks via replication fork reversal (RFR). RuvA specifically binds to HJ cruciform DNA, conferring on it an open structure. The RuvB hexamer acts as an ATP-dependent pump, pulling dsDNA into and through the RuvAB complex. HJ branch migration allows RuvC to scan DNA until it finds its consensus sequence, where it cleaves and resolves the cruciform DNA. This chain is Holliday junction branch migration complex subunit RuvA, found in Streptococcus sanguinis (strain SK36).